Here is a 1234-residue protein sequence, read N- to C-terminus: MEGWSQVALVPLKNSNNNSNSNSSSNNSSNGVLVQDPISTVTTTVFDSVQNLVWCGDTSGYVRSLSSVKTSPYSIQLYPYTKFRTNTLNQPIIQILSHREGVLSLLNDQLSIYNRRGVPRNAVNSMSFKESNGRELFKDLKTMSFNCNSFNEIVVGTELDLIKVDMNKSNLVQQFNHTGKVAMVKEAPKLLALASSTGSLELFDPTSNSSIKTFSAHNGYMSDMDIKGNYIATCGNSIRPKRYHYHQAPEYTADPLVNIFDIRTMKAVAPVAFPAGVSSVRFHPKLPNILIVTSAYGLIEFVDIFDQTNVSVYHADMSAATPPLPPAGSSAAQQQKQQQQQQQQPHLSGLEISENGDFFMFNDGFSNLHLWSITNSGTLSKNFVNFPQEIERPDIVNGPSGVLGGGSGSGDGAFIDIDADVPLSVVGMPYYKELLLSNWPNDLKFVKEKARLPEPIDPDLLSIFEKQQQQKISQTPKWIPYDSLKYGTCNIPEYYSLTSQKDTQIPKFLSEKNGGQKQRQKSIQALEDSIFQCQNDEKIPNCYSRLQIQYSKFGVKDFDFAFYNRTQEYCGLENHSDNSYINSLLQLYRFQSVFYNKVVHSLSNEWLPNDEATIETNPEGSSILNELAYLFDMMFKAKSRNVKTYNFSQVMNHDKQAAKLINLNELMNLNSHEVRELIIAFNNYLLTRLSMDFRNQFNFNFDLTELAYEIEVRGRGHSCPIYDKQMGAMFSLELITPPHNMMSKMSILVNPNTQQDQQQQQQQQQQQQQQQQPTNLANIRKNLNILTYLEYSMNQYKTIPCTQHQHFHPHTLEIRTSITKLPPVLVLNVNLTNEEFRIINSLKQWLVPDLYAVRATNNGSNRGYSFKPSMPVSGDFKKYQLLGYVCEISHQVDTSRTGGHNLVSFVKIKDEWMFFNDYLVIPIPEEEVFNLTYSWKKPVIVIYQEVDKMDKVEPFRHITHFQGNDSILYRDHFAGPIRELYQREYTLLTREKEAPQPGTLVAIDAEFVTLKPEQLEISYNGQKKLVKPKELSLARVSVLRGGREGINSNITGNNNDDNNNISGMIIDDPLFGEAFIDDYIVHKSHIYDYTTNFSGIEPNDLDIHKSSKNLVTLQTAYRKLWLLLNLGVIFVGHGLYTDFRTINLQVPEEQIRDTADFYYKSSFKRQLSLKFLAYVMLKERVQKGNHDSIEDARTALLLYKKYVELNQKSTNEFEKMLNFVYEEGNRLKYRVPEL.

The disordered stretch occupies residues 12–32; the sequence is LKNSNNNSNSNSSSNNSSNGV. Low complexity predominate over residues 14-30; the sequence is NSNNNSNSNSSSNNSSN. WD repeat units lie at residues 176 to 213, 272 to 315, and 342 to 381; these read NHTG…SIKT, AFPA…VYHA, and QQQP…TLSK. Residues 323–346 form a disordered region; sequence PLPPAGSSAAQQQKQQQQQQQQPH. Low complexity predominate over residues 333-344; it reads QQQKQQQQQQQQ. A linker region spans residues 383 to 537; the sequence is FVNFPQEIER…DSIFQCQNDE (155 aa). One can recognise a USP domain in the interval 538–946; the sequence is KIPNCYSRLQ…KPVIVIYQEV (409 aa). The disordered stretch occupies residues 751–775; sequence PNTQQDQQQQQQQQQQQQQQQQPTN. Residues 754–772 are compositionally biased toward low complexity; that stretch reads QQDQQQQQQQQQQQQQQQQ. A divalent metal cation contacts are provided by Asp1004, Glu1006, Asp1138, and Asp1191. The 128-residue stretch at 1072 to 1199 folds into the Exonuclease domain; sequence GEAFIDDYIV…EDARTALLLY (128 aa).

This sequence belongs to the peptidase C19 family. PAN2 subfamily. As to quaternary structure, forms a heterotrimer with an asymmetric homodimer of the regulatory subunit PAN3 to form the poly(A)-nuclease (PAN) deadenylation complex. The cofactor is a divalent metal cation.

Its subcellular location is the cytoplasm. It catalyses the reaction Exonucleolytic cleavage of poly(A) to 5'-AMP.. Positively regulated by the regulatory subunit PAN3. Its function is as follows. Catalytic subunit of the poly(A)-nuclease (PAN) deadenylation complex, one of two cytoplasmic mRNA deadenylases involved in mRNA turnover. PAN specifically shortens poly(A) tails of RNA and the activity is stimulated by poly(A)-binding protein PAB1. PAN deadenylation is followed by rapid degradation of the shortened mRNA tails by the CCR4-NOT complex. Deadenylated mRNAs are then degraded by two alternative mechanisms, namely exosome-mediated 3'-5' exonucleolytic degradation, or deadenylation-dependent mRNA decaping and subsequent 5'-3' exonucleolytic degradation by XRN1. May also be involved in post-transcriptional maturation of mRNA poly(A) tails. This is PAN2-PAN3 deadenylation complex catalytic subunit PAN2 from Lodderomyces elongisporus (strain ATCC 11503 / CBS 2605 / JCM 1781 / NBRC 1676 / NRRL YB-4239) (Yeast).